Consider the following 141-residue polypeptide: HTH-type transcriptional repressor NsrR (141 aa).

In terms of domain architecture, HTH rrf2-type spans 2–129 (QLTSFTDYGL…DNYTLADLVE (128 aa)). Residues 28–51 (ISEVTDVYGVSRNHMVKIINQLSR) constitute a DNA-binding region (H-T-H motif). Residues Cys-91, Cys-96, and Cys-102 each coordinate [2Fe-2S] cluster.

[2Fe-2S] cluster serves as cofactor.

Its function is as follows. Nitric oxide-sensitive repressor of genes involved in protecting the cell against nitrosative stress. May require iron for activity. The sequence is that of HTH-type transcriptional repressor NsrR from Escherichia coli O157:H7 (strain EC4115 / EHEC).